The following is a 336-amino-acid chain: Phosphate acyltransferase (336 aa).

The protein belongs to the PlsX family. Homodimer. Probably interacts with PlsY.

It is found in the cytoplasm. The catalysed reaction is a fatty acyl-[ACP] + phosphate = an acyl phosphate + holo-[ACP]. Its pathway is lipid metabolism; phospholipid metabolism. Its function is as follows. Catalyzes the reversible formation of acyl-phosphate (acyl-PO(4)) from acyl-[acyl-carrier-protein] (acyl-ACP). This enzyme utilizes acyl-ACP as fatty acyl donor, but not acyl-CoA. In Pseudomonas fluorescens (strain Pf0-1), this protein is Phosphate acyltransferase.